Reading from the N-terminus, the 367-residue chain is Aurora kinase (367 aa).

2 stretches are compositionally biased toward polar residues: residues 1 to 29 (MQRN…TSRI) and 37 to 48 (HSPQQRNPNSKI). The interval 1–52 (MQRNSLVNIKLNANSPSKKTTTRPNTSRINKPWRISHSPQQRNPNSKIPSPV) is disordered. At Ser5 the chain carries Phosphoserine; by autocatalysis. Ser76 carries the phosphoserine modification. The Protein kinase domain occupies 104-355 (FELGKKLGKG…LGDVKMHPWI (252 aa)). ATP contacts are provided by residues 110-118 (LGKGKFGKV) and Lys133. The Proton acceptor role is filled by Asp227. Position 260 is a phosphothreonine; by autocatalysis (Thr260).

The protein belongs to the protein kinase superfamily. Ser/Thr protein kinase family. Aurora subfamily. In terms of assembly, component of the CPC complex at least composed of IPL1, BIR1 and SLI15.

The protein localises to the nucleus. Its subcellular location is the cytoplasm. It is found in the cytoskeleton. It localises to the spindle. The protein resides in the chromosome. The protein localises to the centromere. Its subcellular location is the kinetochore. It catalyses the reaction L-seryl-[protein] + ATP = O-phospho-L-seryl-[protein] + ADP + H(+). The catalysed reaction is L-threonyl-[protein] + ATP = O-phospho-L-threonyl-[protein] + ADP + H(+). In terms of biological role, component of the chromosomal passenger complex (CPC), a complex that acts as a key regulator of chromosome segregation and cytokinesis. Has a role in error-correction of aberrent kinetochore-microtubule attachments to ensure that sister kinetochores become bioriented and connect to opposite poles by promoting spindle assembly checkpoint signaling. Acts in opposition to the phosphatase PP1. Not required for kinetochore detachment from microtubules during replication of centromeric DNA. Phosphorylates histone H3 to form H3S10ph during mitosis and meiosis. Phosphorylates CNN1, which contributes to the enrichment of CNN1 on anaphase kinetochores. Phosphorylates RGD1. The chain is Aurora kinase (IPL1) from Saccharomyces cerevisiae (strain ATCC 204508 / S288c) (Baker's yeast).